Here is a 383-residue protein sequence, read N- to C-terminus: ATP phosphoribosyltransferase regulatory subunit (383 aa).

This sequence belongs to the class-II aminoacyl-tRNA synthetase family. HisZ subfamily. Heteromultimer composed of HisG and HisZ subunits.

It localises to the cytoplasm. It functions in the pathway amino-acid biosynthesis; L-histidine biosynthesis; L-histidine from 5-phospho-alpha-D-ribose 1-diphosphate: step 1/9. Its function is as follows. Required for the first step of histidine biosynthesis. May allow the feedback regulation of ATP phosphoribosyltransferase activity by histidine. This chain is ATP phosphoribosyltransferase regulatory subunit, found in Cupriavidus necator (strain ATCC 17699 / DSM 428 / KCTC 22496 / NCIMB 10442 / H16 / Stanier 337) (Ralstonia eutropha).